Consider the following 373-residue polypeptide: Galactoside alpha-(1,2)-fucosyltransferase 1 (373 aa).

Residues 1 to 12 (MWPPSRRQLCLA) are Cytoplasmic-facing. A helical; Signal-anchor for type II membrane protein membrane pass occupies residues 13–29 (FLLVCALSAFSFLLHLH). Residues 30-373 (QDLFRNGLAL…GSWRPWRFLG (344 aa)) lie on the Lumenal side of the membrane. N-linked (GlcNAc...) asparagine glycosylation is found at asparagine 66, asparagine 301, and asparagine 327.

The protein belongs to the glycosyltransferase 11 family. As to expression, brain.

Its subcellular location is the golgi apparatus. It localises to the golgi stack membrane. The enzyme catalyses a beta-D-galactosyl-(1-&gt;4)-N-acetyl-beta-D-glucosaminyl derivative + GDP-beta-L-fucose = an alpha-L-Fuc-(1-&gt;2)-beta-D-Gal-(1-&gt;4)-beta-D-GlcNAc derivative + GDP + H(+). The catalysed reaction is a ganglioside GA1 + GDP-beta-L-fucose = a ganglioside Fuc-GA1 + GDP + H(+). It catalyses the reaction a beta-D-Gal-(1-&gt;3)-beta-D-GlcNAc-(1-&gt;3)-beta-D-Gal-(1-&gt;4)-beta-D-Glc-(1&lt;-&gt;1')-Cer(d18:1(4E)) + GDP-beta-L-fucose = alpha-L-fucosyl-(1-&gt;2)- beta-D-galactosyl-(1-&gt;3)-N-acetyl-beta-D-glucosaminyl-(1-&gt;3)-beta-D-galactosyl-(1-&gt;4)-beta-D-glucosyl-(1&lt;-&gt;1')-N-acylsphing-4-enine + GDP + H(+). It carries out the reaction a neolactoside nLc4Cer(d18:1(4E)) + GDP-beta-L-fucose = a neolactoside IV(2)-alpha-Fuc-nLc4Cer(d18:1(4E)) + GDP + H(+). The enzyme catalyses a ganglioside GM1 + GDP-beta-L-fucose = a ganglioside Fuc-GM1 + GDP + H(+). The catalysed reaction is beta-D-galactosyl-(1-&gt;3)-N-acetyl-D-galactosamine + GDP-beta-L-fucose = alpha-L-fucosyl-(1-&gt;2)-beta-D-galactosyl-(1-&gt;3)-N-acetyl-D-galactosamine + GDP + H(+). It functions in the pathway protein modification; protein glycosylation. In terms of biological role, catalyzes the transfer of L-fucose, from a guanosine diphosphate-beta-L-fucose, to the terminal galactose residue of glycoconjugates through an alpha(1,2) linkage leading to H antigen synthesis that is an intermediate substrate in the synthesis of ABO blood group antigens. H antigen is essential for maturation of the glomerular layer of the main olfactory bulb, in cell migration and early cell-cell contacts during tumor associated angiogenesis. Preferentially fucosylates soluble lactose and to a lesser extent fucosylates glycolipids gangliosides GA1 and GM1a. This is Galactoside alpha-(1,2)-fucosyltransferase 1 from Oryctolagus cuniculus (Rabbit).